Consider the following 393-residue polypeptide: Fructose-bisphosphate aldolase 4, cytosolic (393 aa).

Substrate is bound at residue arginine 73. Cysteine 207 is modified (S-glutathionyl cysteine; transient; alternate). Residue cysteine 207 is modified to S-nitrosocysteine; transient; alternate. Glutamate 217 functions as the Proton acceptor in the catalytic mechanism. The active-site Schiff-base intermediate with dihydroxyacetone-P is lysine 259. Substrate is bound by residues serine 301 to glycine 303 and arginine 333.

Belongs to the class I fructose-bisphosphate aldolase family. In terms of assembly, homotetramer. S-glutathionylated at Cys-207. Post-translationally, S-nitrosylated at Cys-207. In terms of tissue distribution, highly expressed in flowers.

The protein resides in the cytoplasm. It localises to the cytosol. It catalyses the reaction beta-D-fructose 1,6-bisphosphate = D-glyceraldehyde 3-phosphate + dihydroxyacetone phosphate. It functions in the pathway carbohydrate degradation; glycolysis; D-glyceraldehyde 3-phosphate and glycerone phosphate from D-glucose: step 4/4. Fructose-bisphosphate aldolase that plays a key role in glycolysis and gluconeogenesis. This is Fructose-bisphosphate aldolase 4, cytosolic from Arabidopsis thaliana (Mouse-ear cress).